Consider the following 209-residue polypeptide: FMN-dependent NADH:quinone oxidoreductase (209 aa).

FMN-binding positions include Ser18, 102 to 105 (MYNF), and 146 to 149 (SRGG).

Belongs to the azoreductase type 1 family. Homodimer. FMN serves as cofactor.

It catalyses the reaction 2 a quinone + NADH + H(+) = 2 a 1,4-benzosemiquinone + NAD(+). It carries out the reaction N,N-dimethyl-1,4-phenylenediamine + anthranilate + 2 NAD(+) = 2-(4-dimethylaminophenyl)diazenylbenzoate + 2 NADH + 2 H(+). In terms of biological role, quinone reductase that provides resistance to thiol-specific stress caused by electrophilic quinones. Functionally, also exhibits azoreductase activity. Catalyzes the reductive cleavage of the azo bond in aromatic azo compounds to the corresponding amines. The chain is FMN-dependent NADH:quinone oxidoreductase from Saccharophagus degradans (strain 2-40 / ATCC 43961 / DSM 17024).